The following is a 313-amino-acid chain: MPVKIPDHLPAAGILESENIFVMSETRAANQDIRPMKVLILNLMPNKIETETQLLRLLGNTPLQVDVDLLRIHDKESKHTSIDHMNTFYRDFEDVRHKNYDGLIITGAPLGQIDFEDVTYWDHIREIIDWSQQHVTSVLFLCWAAHAGLYHLYGLNRKILEQKRSGVFVHRRTCQHFPLLRGFDDEFFAPHSRFAEMDVEEIRQHPQLQLLAESDEAGAYLVLSRNNRNLFVMGHPEYQKSTLNDEYHRDLAQSLNPNVPQNYYRNDDPKADAIARWHSHGSLLVSNWLNYYVYQLTPYDLSDMTAMTPWESQ.

Residue Cys-142 is the Acyl-thioester intermediate of the active site. Positions 163 and 192 each coordinate substrate. The active-site Proton acceptor is His-235. Glu-237 is an active-site residue. Arg-249 contributes to the substrate binding site.

It belongs to the MetA family.

The protein resides in the cytoplasm. The catalysed reaction is L-homoserine + succinyl-CoA = O-succinyl-L-homoserine + CoA. The protein operates within amino-acid biosynthesis; L-methionine biosynthesis via de novo pathway; O-succinyl-L-homoserine from L-homoserine: step 1/1. Transfers a succinyl group from succinyl-CoA to L-homoserine, forming succinyl-L-homoserine. The polypeptide is Homoserine O-succinyltransferase (Shewanella oneidensis (strain ATCC 700550 / JCM 31522 / CIP 106686 / LMG 19005 / NCIMB 14063 / MR-1)).